Reading from the N-terminus, the 455-residue chain is Asparagine--tRNA ligase (455 aa).

This sequence belongs to the class-II aminoacyl-tRNA synthetase family. Homodimer.

It localises to the cytoplasm. The catalysed reaction is tRNA(Asn) + L-asparagine + ATP = L-asparaginyl-tRNA(Asn) + AMP + diphosphate + H(+). The sequence is that of Asparagine--tRNA ligase from Lawsonia intracellularis (strain PHE/MN1-00).